Reading from the N-terminus, the 129-residue chain is Small ribosomal subunit protein uS11 (129 aa).

It belongs to the universal ribosomal protein uS11 family. Part of the 30S ribosomal subunit. Interacts with proteins S7 and S18. Binds to IF-3.

In terms of biological role, located on the platform of the 30S subunit, it bridges several disparate RNA helices of the 16S rRNA. Forms part of the Shine-Dalgarno cleft in the 70S ribosome. The protein is Small ribosomal subunit protein uS11 of Halalkalibacterium halodurans (strain ATCC BAA-125 / DSM 18197 / FERM 7344 / JCM 9153 / C-125) (Bacillus halodurans).